The chain runs to 81 residues: Small ribosomal subunit protein bS16 (81 aa).

It belongs to the bacterial ribosomal protein bS16 family.

The protein is Small ribosomal subunit protein bS16 of Treponema denticola (strain ATCC 35405 / DSM 14222 / CIP 103919 / JCM 8153 / KCTC 15104).